Reading from the N-terminus, the 913-residue chain is Clumping factor B (913 aa).

The signal sequence occupies residues 1–44 (MKKRIDYLSNKQNKYSIRRFTVGTTSVIVGATILFGIGNHQAQA). The YSIRK-G/S signaling motif motif lies at 15-26 (YSIRRFTVGTTS). Polar residues-rich tracts occupy residues 44 to 61 (ASEQ…NASA) and 68 to 95 (MIET…NVDS). The segment at 44-192 (ASEQSNDTTQ…QGTSKPSVRT (149 aa)) is disordered. Residues 45–542 (SEQSNDTTQS…GSADGDSAVN (498 aa)) form a ligand binding A region region. Low complexity predominate over residues 96–119 (TTKPMSTQTSNTTTTEPASTNETP). Polar residues predominate over residues 120-189 (QPTAIKNQAT…SNAQGTSKPS (70 aa)). The short motif at 272-276 (DYSNS) is the MIDAS-like motif element. The interval 530–885 (YGGGSADGDS…ETGDKSENTN (356 aa)) is disordered. The segment covering 545–555 (DPTPGPPVDPE) has biased composition (pro residues). A compositionally biased stretch (acidic residues) spans 556–837 (PSPDPEPEPT…SDSDSDSDSD (282 aa)). Polar residues predominate over residues 841-852 (RVTPPNNEQKAP). The span at 869 to 882 (HKTDALPETGDKSE) shows a compositional bias: basic and acidic residues. The LPXTG sorting signal signature appears at 874–878 (LPETG). Thr877 bears the Pentaglycyl murein peptidoglycan amidated threonine mark. The propeptide at 878–913 (GDKSENTNATLFGAMMALLGSLLLFRKRKQDHKEKA) is removed by sortase.

It belongs to the serine-aspartate repeat-containing protein (SDr) family. Post-translationally, proteolytically cleaved by aureolysin (aur). This cleavage leads to the inactivation of ClfB.

The protein localises to the secreted. It localises to the cell wall. Cell surface-associated protein implicated in virulence by promoting bacterial attachment to both alpha- and beta-chains of human fibrinogen and inducing the formation of bacterial clumps. In Staphylococcus aureus (strain COL), this protein is Clumping factor B (clfB).